The chain runs to 112 residues: UPF0060 membrane protein XOO1694 (112 aa).

A run of 4 helical transmembrane segments spans residues 8–28 (LLLFAATALAELVGCYLPYLW), 32–52 (GGSVWLLLPTALRLASFVWLL), 62–82 (VYAAYGGVYIASALGLWLWWV), and 92–112 (LLGAVCCLFGMAIIMFAPRSA).

Belongs to the UPF0060 family.

The protein localises to the cell inner membrane. This Xanthomonas oryzae pv. oryzae (strain MAFF 311018) protein is UPF0060 membrane protein XOO1694.